A 303-amino-acid polypeptide reads, in one-letter code: Sulfate adenylyltransferase subunit 2 (303 aa).

The tract at residues 282 to 303 (SGRLIDHDESGSMEKKKREGYF) is disordered.

Belongs to the PAPS reductase family. CysD subfamily. Heterodimer composed of CysD, the smaller subunit, and CysN.

It carries out the reaction sulfate + ATP + H(+) = adenosine 5'-phosphosulfate + diphosphate. It functions in the pathway sulfur metabolism; hydrogen sulfide biosynthesis; sulfite from sulfate: step 1/3. With CysN forms the ATP sulfurylase (ATPS) that catalyzes the adenylation of sulfate producing adenosine 5'-phosphosulfate (APS) and diphosphate, the first enzymatic step in sulfur assimilation pathway. APS synthesis involves the formation of a high-energy phosphoric-sulfuric acid anhydride bond driven by GTP hydrolysis by CysN coupled to ATP hydrolysis by CysD. This is Sulfate adenylyltransferase subunit 2 from Maricaulis maris (strain MCS10) (Caulobacter maris).